A 316-amino-acid polypeptide reads, in one-letter code: Ribosomal RNA small subunit methyltransferase H (316 aa).

Residues 35 to 37 (GGH), Asp55, Phe79, Asp101, and Gln108 each bind S-adenosyl-L-methionine.

This sequence belongs to the methyltransferase superfamily. RsmH family.

Its subcellular location is the cytoplasm. The catalysed reaction is cytidine(1402) in 16S rRNA + S-adenosyl-L-methionine = N(4)-methylcytidine(1402) in 16S rRNA + S-adenosyl-L-homocysteine + H(+). In terms of biological role, specifically methylates the N4 position of cytidine in position 1402 (C1402) of 16S rRNA. The polypeptide is Ribosomal RNA small subunit methyltransferase H (Aliivibrio fischeri (strain ATCC 700601 / ES114) (Vibrio fischeri)).